We begin with the raw amino-acid sequence, 338 residues long: Outer membrane transporter protein TsaT (338 aa).

The first 22 residues, 1-22 (MNFRRRLCTAALIAALPLASQA), serve as a signal peptide directing secretion.

As to quaternary structure, part of a two-component transport system composed of TsaT and TsaS.

The protein localises to the cell outer membrane. Functionally, involved in the uptake of p-toluenesulphonate (TSA). Forms a large, general diffusion pore with a preference for anions. This chain is Outer membrane transporter protein TsaT (tsaT), found in Comamonas testosteroni (Pseudomonas testosteroni).